A 409-amino-acid chain; its full sequence is MLGSTGSIGTQTLQIAEEFPEQFRVVALTAGQNLDLLVQQIQRHQPELVALANADLLPELQQRLDALGTDRKRPQLVGGPDGLNIAASWESADLVVTGIVGCAGLLPTLAAVRAGKDLALANKETLIAAGPVVLPELKKSGSRLLPADSEHSAIFQCLQGTPWAENARLSTGVPTPGLRRIQLTASGGAFRDWKAEDLENATVADATSHPNWSMGRKITVDSASLMNKGLEVIEAHYLFGLDYDHIEIVIHPQSIIHSMIELADSSVLAQLGWPDMKLPILYCLSWPSRLETPWRRLDLTEVGQLSFRAPDPAKYPCMQLAYAAGRAGGTMPAVMNAANEEAVAQFLEEKIHFLDIPVVIEAACERHKADLIAHPQLEDVLAVDQWARMAVREQVKRGTTRVPLAALAA.

NADPH contacts are provided by Thr5, Gly6, Ser7, Ile8, Gly31, Asn33, and Asn122. Lys123 contacts 1-deoxy-D-xylulose 5-phosphate. Residue Glu124 participates in NADPH binding. Asp148 is a binding site for Mn(2+). 1-deoxy-D-xylulose 5-phosphate contacts are provided by Ser149, Glu150, Ser186, and His209. Glu150 serves as a coordination point for Mn(2+). Gly215 contributes to the NADPH binding site. 1-deoxy-D-xylulose 5-phosphate is bound by residues Ser222, Asn227, Lys228, and Glu231. Position 231 (Glu231) interacts with Mn(2+).

Belongs to the DXR family. Requires Mg(2+) as cofactor. The cofactor is Mn(2+).

It catalyses the reaction 2-C-methyl-D-erythritol 4-phosphate + NADP(+) = 1-deoxy-D-xylulose 5-phosphate + NADPH + H(+). Its pathway is isoprenoid biosynthesis; isopentenyl diphosphate biosynthesis via DXP pathway; isopentenyl diphosphate from 1-deoxy-D-xylulose 5-phosphate: step 1/6. Functionally, catalyzes the NADPH-dependent rearrangement and reduction of 1-deoxy-D-xylulose-5-phosphate (DXP) to 2-C-methyl-D-erythritol 4-phosphate (MEP). The protein is 1-deoxy-D-xylulose 5-phosphate reductoisomerase of Parasynechococcus marenigrum (strain WH8102).